The sequence spans 449 residues: Chlorobenzene dioxygenase subunit alpha (449 aa).

The Rieske domain occupies 54 to 163; sequence WLLLGHETQI…VATYKGLIFA (110 aa). The [2Fe-2S] cluster site is built by C96, H98, C116, and H119. The Fe cation site is built by H222, H228, and D376.

It belongs to the bacterial ring-hydroxylating dioxygenase alpha subunit family. As to quaternary structure, this dioxygenase system consists of four proteins: the two subunits of the oxygenase component (TecA1 and TecA2), a ferredoxin (TecA3) and a ferredoxin reductase (TecA4). [2Fe-2S] cluster is required as a cofactor. It depends on Fe cation as a cofactor.

The enzyme catalyses chlorobenzene + NADH + O2 + H(+) = (1R,2R)-3-chlorocyclohexa-3,5-diene-1,2-diol + NAD(+). Its pathway is aromatic compound metabolism. In terms of biological role, part of the oxygenase component of the chlorobenzene dioxygenase system that catalyzes the dihydroxylation of a range of aromatic compounds, including chlorinated benzenes and toluenes, and dinuclear aromatics such as biphenyl and dibenzo-p-dioxin. The alpha subunit is responsible for substrate specificity. The polypeptide is Chlorobenzene dioxygenase subunit alpha (Cupriavidus sp. (strain PS12)).